We begin with the raw amino-acid sequence, 88 residues long: Large ribosomal subunit protein bL31B (88 aa).

It belongs to the bacterial ribosomal protein bL31 family. Type B subfamily. As to quaternary structure, part of the 50S ribosomal subunit.

The chain is Large ribosomal subunit protein bL31B from Corynebacterium efficiens (strain DSM 44549 / YS-314 / AJ 12310 / JCM 11189 / NBRC 100395).